Consider the following 159-residue polypeptide: MQQAPVVLSTLDKLLNWGRSNSLWPLTYGLACCAIEMMATGGSRFDFDRFGTIFRASPRQSDVMIIAGTLTKKHAEFMRRLYDQMPEPKWVISMGSCANTGGMFNTYATVQGADRIIPVDIYLPGCAPRPETLQYALMVLQDKIRRSKAIKQDAPKRLV.

4 residues coordinate [4Fe-4S] cluster: C32, C33, C97, and C126.

Belongs to the complex I 20 kDa subunit family. NDH-1 is composed of 14 different subunits. Subunits NuoB, C, D, E, F, and G constitute the peripheral sector of the complex. [4Fe-4S] cluster serves as cofactor.

The protein localises to the cell inner membrane. It catalyses the reaction a quinone + NADH + 5 H(+)(in) = a quinol + NAD(+) + 4 H(+)(out). Functionally, NDH-1 shuttles electrons from NADH, via FMN and iron-sulfur (Fe-S) centers, to quinones in the respiratory chain. The immediate electron acceptor for the enzyme in this species is believed to be ubiquinone. Couples the redox reaction to proton translocation (for every two electrons transferred, four hydrogen ions are translocated across the cytoplasmic membrane), and thus conserves the redox energy in a proton gradient. This chain is NADH-quinone oxidoreductase subunit B, found in Helicobacter acinonychis (strain Sheeba).